Consider the following 227-residue polypeptide: Fibrillarin-like rRNA/tRNA 2'-O-methyltransferase (227 aa).

S-adenosyl-L-methionine-binding positions include 86–87, 105–106, 130–131, and 150–153; these read TT, EF, DA, and DVAQ.

It belongs to the methyltransferase superfamily. Fibrillarin family. Interacts with nop5. Component of box C/D small ribonucleoprotein (sRNP) particles that contain rpl7ae, FlpA and nop5, plus a guide RNA.

Functionally, involved in pre-rRNA and tRNA processing. Utilizes the methyl donor S-adenosyl-L-methionine to catalyze the site-specific 2'-hydroxyl methylation of ribose moieties in rRNA and tRNA. Site specificity is provided by a guide RNA that base pairs with the substrate. Methylation occurs at a characteristic distance from the sequence involved in base pairing with the guide RNA. The polypeptide is Fibrillarin-like rRNA/tRNA 2'-O-methyltransferase (Pyrococcus horikoshii (strain ATCC 700860 / DSM 12428 / JCM 9974 / NBRC 100139 / OT-3)).